The following is a 628-amino-acid chain: Vacuolar-sorting receptor 4 (628 aa).

The N-terminal stretch at 1-24 (MKQLLCYLPWLLLLSLVVSPFNEA) is a signal peptide. Topologically, residues 25-569 (RFVVEKNSLS…SKTGSQVKSA (545 aa)) are lumenal. The 113-residue stretch at 56 to 168 (QYGGSMAGTV…GFGEKLKKAI (113 aa)) folds into the PA domain. N-linked (GlcNAc...) asparagine glycosylation is found at N148, N294, and N434. EGF-like domains are found at residues 416–466 (ETNE…SHCE) and 469–516 (GPGR…KKCE). Disulfide bonds link C420–C438, C427–C447, C449–C465, C473–C493, C480–C501, C503–C515, and C545–C558. In terms of domain architecture, EGF-like 3; calcium-binding spans 517 to 559 (DINECKEKKACQCPECSCKNTWGSYECSCSGDLLYMRDHDTCI). Residues 570-590 (WAAVWLIMLSLGLAAAGAYLV) traverse the membrane as a helical segment. Over 591–628 (YKYRLRQYMDSEIRAIMAQYMPLDSQPEVPNHTNDERA) the chain is Cytoplasmic. The Tyrosine-based internalization motif motif lies at 610-613 (YMPL).

This sequence belongs to the VSR (BP-80) family. As to expression, expressed at low levels in seeds, seedlings, roots, stems, leaves, flowers and siliques.

The protein resides in the membrane. Its subcellular location is the golgi apparatus membrane. The protein localises to the cytoplasmic vesicle. It is found in the clathrin-coated vesicle membrane. It localises to the prevacuolar compartment membrane. In terms of biological role, vacuolar-sorting receptor (VSR) involved in clathrin-coated vesicles sorting from Golgi apparatus to vacuoles. The polypeptide is Vacuolar-sorting receptor 4 (VSR4) (Arabidopsis thaliana (Mouse-ear cress)).